We begin with the raw amino-acid sequence, 158 residues long: uncharacterized protein (158 aa).

2 consecutive transmembrane segments (helical) span residues Leu10–Phe30 and Tyr40–Leu60.

Its subcellular location is the membrane. This is an uncharacterized protein from Schizosaccharomyces pombe (strain 972 / ATCC 24843) (Fission yeast).